A 427-amino-acid chain; its full sequence is UBX domain-containing protein 2 (427 aa).

Disordered regions lie at residues Phe115–Ser143 and Glu273–Asp331. Positions Ser311–Ser326 are enriched in low complexity. Positions Pro349 to Glu425 constitute a UBX domain. The residue at position 371 (Ser371) is a Phosphoserine.

In terms of assembly, interacts with cdc48.

In terms of biological role, involved in CDC48-dependent protein degradation through the ubiquitin/proteasome pathway. This is UBX domain-containing protein 2 (ubx2) from Schizosaccharomyces pombe (strain 972 / ATCC 24843) (Fission yeast).